A 1409-amino-acid chain; its full sequence is Tensin-2 (1409 aa).

The tract at residues 1 to 35 (MKSSGPVERLLRALGRRDSSRAASRPRKAEPHSFR) is disordered. Over residues 9-20 (RLLRALGRRDSS) the composition is skewed to basic and acidic residues. Residues 31-79 (PHSFREKVFRKKPPVCAVCKVTIDGTGVSCRVCKVATHRKCEAKVTSAC) form a Phorbol-ester/DAG-type zinc finger. Position 91 is a phosphothreonine (threonine 91). Phosphoserine is present on residues serine 118 and serine 120. Positions 122–294 (DPLMERRWDL…SYFSGLLSGS (173 aa)) constitute a Phosphatase tensin-type domain. Catalysis depends on cysteine 231, which acts as the Phosphocysteine intermediate. The region spanning 299–425 (SSPLFLHYVL…ASVEFVFSSS (127 aa)) is the C2 tensin-type domain. At serine 455 the chain carries Phosphoserine. A Phosphotyrosine modification is found at tyrosine 456. The tract at residues 462–536 (HHEDSVDGSL…SPGRPPPTAA (75 aa)) is disordered. At serine 466 the chain carries Phosphoserine. Threonine 474 bears the Phosphothreonine mark. Position 481 is a phosphoserine (serine 481). Tyrosine 483 is modified (phosphotyrosine). The segment covering 491-506 (RQTPPAPSPEPPPPPM) has biased composition (pro residues). Arginine 555 is subject to Omega-N-methylarginine. Disordered regions lie at residues 562-582 (AILD…GVYP), 812-1098 (PGEG…SSPA), and 1111-1130 (LSDN…QSNV). Phosphoserine occurs at positions 820, 825, 830, 832, 835, and 845. Composition is skewed to polar residues over residues 900 to 918 (SASS…SSPV) and 930 to 940 (RSPTSAPTQRL). Threonine 910 is modified (phosphothreonine). Phosphoserine occurs at positions 931, 941, and 972. Residues 968 to 982 (PLAPSPVSPTFPPSS) show a composition bias toward pro residues. Position 977 is a phosphothreonine (threonine 977). Phosphoserine is present on residues serine 991 and serine 1003. Residues 1046 to 1056 (PEPPQSSPTPA) are compositionally biased toward pro residues. Positions 1140–1247 (WYKPHLSRDQ…SLPCCLRIPS (108 aa)) constitute an SH2 domain. Threonine 1182 is modified (phosphothreonine). The residue at position 1247 (serine 1247) is a Phosphoserine. One can recognise a PTB domain in the interval 1275-1408 (ACSVLYLTSV…FITKVLLGQR (134 aa)).

The protein belongs to the PTEN phosphatase protein family. As to quaternary structure, interacts with AXL. Interacts with SYK; leading to its phosphorylation. Interacts with SQSTM1 (via PB1 domain); the interaction leads to sequestration of TNS2 in cytoplasmic aggregates with SQSTM1 and promotes TNS2 ubiquitination and proteasomal degradation. Post-translationally, ubiquitinated following sequestration in cytoplasmic aggregates with SQSTM1, leading to proteasomal degradation. In terms of tissue distribution, detected in heart, kidney, brain, thymus, spleen, liver, placenta, lung, skeletal muscle and small intestine.

The protein localises to the cell junction. The protein resides in the focal adhesion. It is found in the cell membrane. It localises to the cytoplasm. It catalyses the reaction O-phospho-L-tyrosyl-[protein] + H2O = L-tyrosyl-[protein] + phosphate. Functionally, tyrosine-protein phosphatase which regulates cell motility, proliferation and muscle-response to insulin. Phosphatase activity is mediated by binding to phosphatidylinositol-3,4,5-triphosphate (PtdIns(3,4,5)P3) via the SH2 domain. In muscles and under catabolic conditions, dephosphorylates IRS1 leading to its degradation and muscle atrophy. Negatively regulates PI3K-AKT pathway activation. Dephosphorylates nephrin NPHS1 in podocytes which regulates activity of the mTORC1 complex. Under normal glucose conditions, NPHS1 outcompetes IRS1 for binding to phosphatidylinositol 3-kinase (PI3K) which balances mTORC1 activity but high glucose conditions lead to up-regulation of TNS2, increased NPHS1 dephosphorylation and activation of mTORC1, contributing to podocyte hypertrophy and proteinuria. Required for correct podocyte morphology, podocyte-glomerular basement membrane interaction and integrity of the glomerular filtration barrier. Enhances RHOA activation in the presence of DLC1. Plays a role in promoting DLC1-dependent remodeling of the extracellular matrix. This Homo sapiens (Human) protein is Tensin-2 (TNS2).